A 1119-amino-acid polypeptide reads, in one-letter code: Agglutinin-like protein 3 (1119 aa).

A signal peptide spans M1–A17. Intrachain disulfides connect C73/C150, C96/C112, C205/C298, and C227/C256. ALS repeat units lie at residues T365–P396, T401–P432, and V438–P469. N-linked (GlcNAc...) asparagine glycosylation is present at N471. ALS repeat units lie at residues V474–P505 and V510–P541. An N-linked (GlcNAc...) asparagine glycan is attached at N543. An ALS 6 repeat occupies V546 to P577. A glycan (N-linked (GlcNAc...) asparagine) is linked at N579. ALS repeat units follow at residues V582–P613 and V618–P649. N-linked (GlcNAc...) asparagine glycosylation occurs at N651. The stretch at V654 to P685 is one ALS 9 repeat. An N-linked (GlcNAc...) asparagine glycan is attached at N687. The stretch at V690–P721 is one ALS 10 repeat. N-linked (GlcNAc...) asparagine glycosylation occurs at N723. An ALS 11 repeat occupies V726–P757. N759 is a glycosylation site (N-linked (GlcNAc...) asparagine). 2 ALS repeats span residues V762–P793 and V798–Y827. N845 is a glycosylation site (N-linked (GlcNAc...) asparagine). Residues M892–T1077 form a disordered region. Residues T894 to T929 are compositionally biased toward low complexity. Composition is skewed to polar residues over residues A930–S941 and T947–S965. The span at T974 to T983 shows a compositional bias: low complexity. N987 is a glycosylation site (N-linked (GlcNAc...) asparagine). Composition is skewed to low complexity over residues A998–V1022 and A1035–A1048. N1050 and N1061 each carry an N-linked (GlcNAc...) asparagine glycan. The span at T1057 to T1077 shows a compositional bias: low complexity. The GPI-anchor amidated serine moiety is linked to residue S1098. Positions G1099–I1119 are cleaved as a propeptide — removed in mature form.

The protein belongs to the ALS family. Post-translationally, the GPI-anchor is attached to the protein in the endoplasmic reticulum and serves to target the protein to the cell surface. There, the glucosamine-inositol phospholipid moiety is cleaved off and the GPI-modified mannoprotein is covalently attached via its lipidless GPI glycan remnant to the 1,6-beta-glucan of the outer cell wall layer.

It is found in the cell membrane. It localises to the secreted. The protein localises to the cell wall. In terms of biological role, cell surface adhesion protein which mediates both yeast-to-host tissue adherence and yeast aggregation. Plays an important role in the biofilm formation and pathogenesis of C.albicans infections. Necessary for C.albicans to bind to N-cadherin on endothelial cells and E-cadherin on oral epithelial cells and subsequent endocytosis by these cells. During disseminated infection, mediates initial trafficking to the brain and renal cortex and contributes to fungal persistence in the kidneys. In Candida albicans (Yeast), this protein is Agglutinin-like protein 3 (ALS3).